The sequence spans 142 residues: MKTFTAKPETVKRDWFVVDAAGQTLGRLATEIASRLRGKHKPEYTPHVDTGDYIVVINAEQIRVTGAKTTDKMYYSHSGFPGGIKSINFEKLIAKAPERVIETAVKGMLPKNPLGRDMYRKLKVYAGAAHPHTAQQPQELKI.

Belongs to the universal ribosomal protein uL13 family. As to quaternary structure, part of the 50S ribosomal subunit.

This protein is one of the early assembly proteins of the 50S ribosomal subunit, although it is not seen to bind rRNA by itself. It is important during the early stages of 50S assembly. This is Large ribosomal subunit protein uL13 from Pseudomonas fluorescens (strain Pf0-1).